Here is a 333-residue protein sequence, read N- to C-terminus: Ribosomal protein L11 methyltransferase (333 aa).

Residues Thr-160, Gly-181, Asp-203, and Asn-267 each coordinate S-adenosyl-L-methionine.

The protein belongs to the methyltransferase superfamily. PrmA family.

It localises to the cytoplasm. The catalysed reaction is L-lysyl-[protein] + 3 S-adenosyl-L-methionine = N(6),N(6),N(6)-trimethyl-L-lysyl-[protein] + 3 S-adenosyl-L-homocysteine + 3 H(+). Methylates ribosomal protein L11. The sequence is that of Ribosomal protein L11 methyltransferase from Lachnoclostridium phytofermentans (strain ATCC 700394 / DSM 18823 / ISDg) (Clostridium phytofermentans).